Reading from the N-terminus, the 271-residue chain is Thioredoxin-related transmembrane protein 2 homolog (271 aa).

The N-terminal stretch at 1–28 is a signal peptide; the sequence is MTWKKQMALLAKPYYWVNILLAISYLLA. Over 29–102 the chain is Extracellular; that stretch reads KKTQFICTRL…AILWAYADFR (74 aa). Residues 103–123 traverse the membrane as a helical segment; that stretch reads YGLGFLLLCVLVGMVLPEPSY. The Thioredoxin domain maps to 112–262; it reads VLVGMVLPEP…YKEAIERLPI (151 aa). The Cytoplasmic segment spans residues 124-271; the sequence is RGPEHITYFR…IAPKEAKKVQ (148 aa). The short motif at 268-271 is the Di-lysine motif element; the sequence is KKVQ.

Its subcellular location is the membrane. This is Thioredoxin-related transmembrane protein 2 homolog from Drosophila melanogaster (Fruit fly).